The sequence spans 428 residues: Stabilizer of axonemal microtubules 4 (428 aa).

A disordered region spans residues 201–231 (AKEETGFTEESNKNPIVFQPPSQALPGDPVL).

As to quaternary structure, microtubule inner protein component of sperm flagellar doublet microtubules. Interacts with PPP1CA.

Its subcellular location is the cell projection. The protein localises to the cilium. The protein resides in the cytoplasm. It localises to the cytoskeleton. It is found in the flagellum axoneme. The protein is Stabilizer of axonemal microtubules 4 of Bos taurus (Bovine).